The following is a 525-amino-acid chain: Phosphoenolpyruvate carboxykinase (ATP) (525 aa).

Residues Arg54, Tyr190, and Lys196 each contribute to the substrate site. ATP contacts are provided by residues Lys196, His215, and 231-239; that span reads GLSGTGKTT. 2 residues coordinate Mn(2+): Lys196 and His215. Asp252 is a binding site for Mn(2+). ATP contacts are provided by Glu280, Arg316, and Thr441. Residue Arg316 coordinates substrate.

This sequence belongs to the phosphoenolpyruvate carboxykinase (ATP) family. Mn(2+) serves as cofactor.

Its subcellular location is the cytoplasm. The catalysed reaction is oxaloacetate + ATP = phosphoenolpyruvate + ADP + CO2. It functions in the pathway carbohydrate biosynthesis; gluconeogenesis. Its function is as follows. Involved in the gluconeogenesis. Catalyzes the conversion of oxaloacetate (OAA) to phosphoenolpyruvate (PEP) through direct phosphoryl transfer between the nucleoside triphosphate and OAA. The polypeptide is Phosphoenolpyruvate carboxykinase (ATP) (Nitratiruptor sp. (strain SB155-2)).